A 405-amino-acid polypeptide reads, in one-letter code: Accessory Sec system protein translocase subunit SecY2 (405 aa).

Transmembrane regions (helical) follow at residues 14 to 34, 63 to 83, 104 to 124, 131 to 151, 156 to 176, 191 to 211, 247 to 267, 285 to 305, 343 to 363, and 368 to 388; these read LFTLFLLFIYVLGSRIILPFV, LSIFSVGLSPWMSAMILWQMF, MYLTLMIAVIQSLAVSLRLPV, ILVVLMNTILLIAGTFFLVWL, ASMGIGGSIVILLSSMVLNIP, GIIVLLALLTLVFSYLLALMY, MYVMSFLSVPAYLFILLGFIF, PLWVYVYISVLFLFSIIFAFV, FSVIGGLFNVVMAGGPMLFVL, and LLRLAMIPGLFMMFGGMIFTI.

The protein belongs to the SecY/SEC61-alpha family. SecY2 subfamily. Component of the accessory SecA2/SecY2 protein translocase complex required to export cell wall proteins. May form heterotrimers with SecE and SecG subunits.

Its subcellular location is the cell membrane. Part of the accessory SecA2/SecY2 system specifically required for export of possible cell wall proteins. The central subunit of a protein translocation channel. In Streptococcus pneumoniae (strain CGSP14), this protein is Accessory Sec system protein translocase subunit SecY2.